The chain runs to 225 residues: Cytochrome c oxidase subunit 2 (225 aa).

Over 1–25 (MSTWFMFMFQESNSYYADNLISFHN) the chain is Mitochondrial intermembrane. Residues 26–47 (MVMMIIIMISTLTVYIILDLFM) traverse the membrane as a helical segment. Over 48-62 (NKFSNLFLLKNHNIE) the chain is Mitochondrial matrix. The helical transmembrane segment at 63 to 82 (IIWTIIPIIILLIICFPSLK) threads the bilayer. Topologically, residues 83-225 (ILYLIDEIVN…YFLNWVNKQI (143 aa)) are mitochondrial intermembrane. 6 residues coordinate Cu cation: His-159, Cys-194, Glu-196, Cys-198, His-202, and Met-205. Glu-196 provides a ligand contact to Mg(2+).

Belongs to the cytochrome c oxidase subunit 2 family. As to quaternary structure, component of the cytochrome c oxidase (complex IV, CIV), a multisubunit enzyme composed of a catalytic core of 3 subunits and several supernumerary subunits. The complex exists as a monomer or a dimer and forms supercomplexes (SCs) in the inner mitochondrial membrane with ubiquinol-cytochrome c oxidoreductase (cytochrome b-c1 complex, complex III, CIII). It depends on Cu cation as a cofactor.

The protein localises to the mitochondrion inner membrane. The enzyme catalyses 4 Fe(II)-[cytochrome c] + O2 + 8 H(+)(in) = 4 Fe(III)-[cytochrome c] + 2 H2O + 4 H(+)(out). In terms of biological role, component of the cytochrome c oxidase, the last enzyme in the mitochondrial electron transport chain which drives oxidative phosphorylation. The respiratory chain contains 3 multisubunit complexes succinate dehydrogenase (complex II, CII), ubiquinol-cytochrome c oxidoreductase (cytochrome b-c1 complex, complex III, CIII) and cytochrome c oxidase (complex IV, CIV), that cooperate to transfer electrons derived from NADH and succinate to molecular oxygen, creating an electrochemical gradient over the inner membrane that drives transmembrane transport and the ATP synthase. Cytochrome c oxidase is the component of the respiratory chain that catalyzes the reduction of oxygen to water. Electrons originating from reduced cytochrome c in the intermembrane space (IMS) are transferred via the dinuclear copper A center (CU(A)) of subunit 2 and heme A of subunit 1 to the active site in subunit 1, a binuclear center (BNC) formed by heme A3 and copper B (CU(B)). The BNC reduces molecular oxygen to 2 water molecules using 4 electrons from cytochrome c in the IMS and 4 protons from the mitochondrial matrix. This Apis mellifera ligustica (Common honeybee) protein is Cytochrome c oxidase subunit 2 (COII).